A 77-amino-acid polypeptide reads, in one-letter code: Large ribosomal subunit protein uL29 (77 aa).

The protein belongs to the universal ribosomal protein uL29 family.

The polypeptide is Large ribosomal subunit protein uL29 (Gluconobacter oxydans (strain 621H) (Gluconobacter suboxydans)).